Reading from the N-terminus, the 199-residue chain is dITP/XTP pyrophosphatase (199 aa).

A substrate-binding site is contributed by 12 to 17 (SGNAGK). The Proton acceptor role is filled by D73. D73 is a Mg(2+) binding site. Residues S74, 157–160 (FGYD), K180, and 185–186 (HR) each bind substrate.

Belongs to the HAM1 NTPase family. Homodimer. Mg(2+) serves as cofactor.

It carries out the reaction XTP + H2O = XMP + diphosphate + H(+). The enzyme catalyses dITP + H2O = dIMP + diphosphate + H(+). It catalyses the reaction ITP + H2O = IMP + diphosphate + H(+). Its function is as follows. Pyrophosphatase that catalyzes the hydrolysis of nucleoside triphosphates to their monophosphate derivatives, with a high preference for the non-canonical purine nucleotides XTP (xanthosine triphosphate), dITP (deoxyinosine triphosphate) and ITP. Seems to function as a house-cleaning enzyme that removes non-canonical purine nucleotides from the nucleotide pool, thus preventing their incorporation into DNA/RNA and avoiding chromosomal lesions. In Neisseria meningitidis serogroup B (strain ATCC BAA-335 / MC58), this protein is dITP/XTP pyrophosphatase.